A 63-amino-acid chain; its full sequence is KEGYGVGKDGCKISCVIGNEFCNKECKYSQKGTGGYCWTWGLACWCQGLPENAKVWESSTNTC.

Residues 1 to 63 (KEGYGVGKDG…KVWESSTNTC (63 aa)) enclose the LCN-type CS-alpha/beta domain. 4 cysteine pairs are disulfide-bonded: cysteine 11/cysteine 63, cysteine 15/cysteine 37, cysteine 22/cysteine 44, and cysteine 26/cysteine 46.

Belongs to the long (4 C-C) scorpion toxin superfamily. Sodium channel inhibitor family. Beta subfamily. In terms of tissue distribution, expressed by the venom gland.

Its subcellular location is the secreted. Beta toxins bind voltage-independently at site-4 of sodium channels (Nav) and shift the voltage of activation toward more negative potentials thereby affecting sodium channel activation and promoting spontaneous and repetitive firing. Induces paralysis in cricket A.domestica but does not induce death. The chain is Beta-insect depressant toxin Im-3 from Isometrus maculatus (Lesser brown scorpion).